The chain runs to 144 residues: Deoxyuridine 5'-triphosphate nucleotidohydrolase (144 aa).

Substrate-binding positions include 63-65 (RSG), Asn-76, and 80-82 (TID).

Belongs to the dUTPase family. Requires Mg(2+) as cofactor.

It catalyses the reaction dUTP + H2O = dUMP + diphosphate + H(+). Its pathway is pyrimidine metabolism; dUMP biosynthesis; dUMP from dCTP (dUTP route): step 2/2. Functionally, this enzyme is involved in nucleotide metabolism: it produces dUMP, the immediate precursor of thymidine nucleotides and it decreases the intracellular concentration of dUTP so that uracil cannot be incorporated into DNA. The chain is Deoxyuridine 5'-triphosphate nucleotidohydrolase from Phocaeicola vulgatus (strain ATCC 8482 / DSM 1447 / JCM 5826 / CCUG 4940 / NBRC 14291 / NCTC 11154) (Bacteroides vulgatus).